A 406-amino-acid polypeptide reads, in one-letter code: Acetylornithine/succinyldiaminopimelate aminotransferase (406 aa).

Pyridoxal 5'-phosphate-binding positions include 108–109 (GT) and Phe-141. Residue Arg-144 participates in N(2)-acetyl-L-ornithine binding. 226 to 229 (DEVQ) contributes to the pyridoxal 5'-phosphate binding site. The residue at position 255 (Lys-255) is an N6-(pyridoxal phosphate)lysine. Position 283 (Ser-283) interacts with N(2)-acetyl-L-ornithine. Pyridoxal 5'-phosphate is bound at residue Thr-284.

The protein belongs to the class-III pyridoxal-phosphate-dependent aminotransferase family. ArgD subfamily. As to quaternary structure, homodimer. Pyridoxal 5'-phosphate serves as cofactor.

The protein localises to the cytoplasm. It catalyses the reaction N(2)-acetyl-L-ornithine + 2-oxoglutarate = N-acetyl-L-glutamate 5-semialdehyde + L-glutamate. The enzyme catalyses N-succinyl-(2S,6S)-2,6-diaminopimelate + 2-oxoglutarate = (S)-2-succinylamino-6-oxoheptanedioate + L-glutamate. The protein operates within amino-acid biosynthesis; L-arginine biosynthesis; N(2)-acetyl-L-ornithine from L-glutamate: step 4/4. It functions in the pathway amino-acid biosynthesis; L-lysine biosynthesis via DAP pathway; LL-2,6-diaminopimelate from (S)-tetrahydrodipicolinate (succinylase route): step 2/3. In terms of biological role, involved in both the arginine and lysine biosynthetic pathways. This is Acetylornithine/succinyldiaminopimelate aminotransferase from Escherichia coli O6:H1 (strain CFT073 / ATCC 700928 / UPEC).